A 536-amino-acid polypeptide reads, in one-letter code: Octopamine receptor beta-2R (536 aa).

Positions 1-26 (MLLCDGLGPEPPRQRHRNRTSAARIR) are disordered. Over 1–157 (MLLCDGLGPE…LDNIVWVFKA (157 aa)) the chain is Extracellular. The segment covering 14–26 (QRHRNRTSAARIR) has biased composition (basic residues). Asn18, Asn92, Asn113, and Asn126 each carry an N-linked (GlcNAc...) asparagine glycan. Residues 158-178 (FVMLLIIIAAICGNLLVIISV) form a helical membrane-spanning segment. Topologically, residues 179–190 (MRVRKLRVITNY) are cytoplasmic. The helical transmembrane segment at 191–211 (FVVSLAMADIMVAIMAMTFNF) threads the bilayer. The Extracellular segment spans residues 212–233 (SVQVTGRWNFSPFLCDLWNSLD). Residues 234 to 256 (VYFSTASILHLCCISVDRYYAIV) traverse the membrane as a helical segment. Over 257-270 (KPLKYPISMTKRVV) the chain is Cytoplasmic. The chain crosses the membrane as a helical span at residues 271-291 (GIMLLNTWISPALLSFLPIFI). The Extracellular portion of the chain corresponds to 292-320 (GWYTTPQHQQFVIQNPTQCSFVVNKYYAV). A helical membrane pass occupies residues 321–341 (ISSSISFWIPCTIMIFTYLAI). The Cytoplasmic segment spans residues 342–412 (FREANRQEKQ…MKREHKAART (71 aa)). The chain crosses the membrane as a helical span at residues 413–433 (LGIIMGTFILCWLPFFLWYTL). Over 434 to 444 (SMTCEECQVPD) the chain is Extracellular. The chain crosses the membrane as a helical span at residues 445 to 465 (IVVSILFWIGYFNSTLNPLIY). Over 466-536 (AYFNRDFREA…RRQSQMVDNL (71 aa)) the chain is Cytoplasmic.

Belongs to the G-protein coupled receptor 1 family. As to expression, in the adult, expressed in the superior protocerebrum and the optic lobe medulla of the central nervous system, nurse cells of egg chambers in the ovary at oogenic stages 1-10, and spermatogonia and spermatocytes in the testis. Expressed in the oviduct epithelium. Also expressed in the spermatheca. Expressed in embryonic and larval ventral nerve cord and brain lobe, embryonic and larval salivary glands and larval imaginal disk and midgut. Also expressed in larval synaptic boutons.

It is found in the cell membrane. Functionally, autoreceptor for octopamine (OA), which is a neurotransmitter, neurohormone, and neuromodulator in invertebrates. Essential for ovulation and fertilization. During ovulation it mediates the OA-induced relaxation of the oviduct visceral muscles, by increasing cAMP levels and activating effectors such as calmodulin-dependent kinase II (CaMKII) and cAMP-dependent protein kinase A (PKA) pathways. Positively regulates synaptic growth; an action that is antagonized by Octbeta1R. The sequence is that of Octopamine receptor beta-2R from Drosophila melanogaster (Fruit fly).